Reading from the N-terminus, the 670-residue chain is Acetyl-coenzyme A synthetase (670 aa).

Residues 205–208 and threonine 326 contribute to the CoA site; that span reads RRGR. ATP is bound by residues 402–404, 426–431, aspartate 517, arginine 532, and arginine 543; these read GEP and STWWMT. Mg(2+) contacts are provided by histidine 556 and valine 559. Arginine 601 contributes to the CoA binding site. Lysine 626 carries the post-translational modification N6-acetyllysine.

This sequence belongs to the ATP-dependent AMP-binding enzyme family. Mg(2+) is required as a cofactor. Post-translationally, acetylated. Deacetylation by the SIR2-homolog deacetylase activates the enzyme.

It carries out the reaction acetate + ATP + CoA = acetyl-CoA + AMP + diphosphate. Catalyzes the conversion of acetate into acetyl-CoA (AcCoA), an essential intermediate at the junction of anabolic and catabolic pathways. AcsA undergoes a two-step reaction. In the first half reaction, AcsA combines acetate with ATP to form acetyl-adenylate (AcAMP) intermediate. In the second half reaction, it can then transfer the acetyl group from AcAMP to the sulfhydryl group of CoA, forming the product AcCoA. This chain is Acetyl-coenzyme A synthetase, found in Pyrobaculum aerophilum (strain ATCC 51768 / DSM 7523 / JCM 9630 / CIP 104966 / NBRC 100827 / IM2).